The sequence spans 430 residues: Transcription factor E2F1 (430 aa).

The interval 62–103 is cyclin A:CDK2 binding; the sequence is ATPQAPRPAPSAPRPALGRPPVKRRLDLETDHQYLAGSSGPF. Residues 84–186 form an interaction with BIRC2/c-IAP1 region; that stretch reads KRRLDLETDH…KKSKNHIQWL (103 aa). A disordered region spans residues 95–123; the sequence is YLAGSSGPFRGRGRHPGKGVKSPGEKSRY. The DNA-binding element occupies 105 to 189; it reads GRGRHPGKGV…KNHIQWLGSH (85 aa). N6-acetyllysine is present on residues Lys112, Lys115, and Lys120. Positions 148 to 169 are leucine-zipper; that stretch reads LNWAAEVLKVQKRRIYDITNVL. The DEF box motif lies at 153 to 189; sequence EVLKVQKRRIYDITNVLEGIQLIAKKSKNHIQWLGSH. Lys180 is modified (N6-methyllysine; by SETD7). The interval 187 to 375 is required for interaction with TRIM28; sequence GSHTMVGIGK…QLSPLVAADS (189 aa). Residues 190 to 279 form a dimerization region; the sequence is TMVGIGKRLE…AVDSSETFQI (90 aa). A disordered region spans residues 294-340; sequence PEESADGISPGKTSCQETSSGEDRTADSGPAGPPPSPPSTSPALDPS. Pro residues predominate over residues 324–333; sequence AGPPPSPPST. The tract at residues 361–430 is transactivation; that stretch reads PMEEDQLSPL…DFGDLTPLDF (70 aa). A phosphoserine mark is found at Ser368 and Ser396. Positions 402–419 are RB1 binding; it reads LDYHFGLEEGEGIRDLFD. Thr426 bears the Phosphothreonine mark.

It belongs to the E2F/DP family. In terms of assembly, component of the DRTF1/E2F transcription factor complex. Forms heterodimers with DP family members. The E2F1 complex binds specifically hypophosphorylated RB1, the interaction represses E2F1-driven transcription. During the cell cycle, RB1 becomes phosphorylated in mid-to-late G1 phase, detaches from the DRTF1/E2F complex, rendering E2F transcriptionally active. Interacts with TRRAP, which probably mediates its interaction with histone acetyltransferase complexes, leading to transcription activation. Binds TOPBP1 and EAPP. Interacts with ARID3A. Interacts with TRIM28; the interaction inhibits E2F1 acetylation through recruiting HDAC1 and represses its transcriptional activity. Interaction with KAT2B; the interaction acetylates E2F1 enhancing its DNA-binding and transcriptional activity. Interacts with BIRC2/c-IAP1 (via BIR domains). The complex TFDP1:E2F1 interacts with CEBPA; the interaction prevents CEBPA binding to target genes promoters and represses its transcriptional activity. Interacts with RRP1B. Interacts with HCFC1. Interacts with KMT2E; the interaction is probably indirect and is mediated via HCFC1. Interacts with DCAF5 and L3MBTL3; the interaction requires methylation at Lys-180 and is necessary to target E2F1 for ubiquitination by the CRL4-DCAF5 E3 ubiquitin ligase complex. Post-translationally, phosphorylated by CDK2 and cyclin A-CDK2 in the S-phase. Phosphorylation by CHEK2 stabilizes E2F1 upon DNA damage and regulates its effect on transcription and apoptosis. Phosphorylation at Ser-396 by GSK3B promotes interaction with USP11, leading to its deubiquitination and stabilization. In terms of processing, ubiquitinated via 'Lys-63'-linked ubiquitin, leading to its degradation. Deubiquitinated by USP11 following phosphorylation by GSK3B, promoting its stability. Acetylation stimulates DNA-binding. Enhanced under stress conditions such as DNA damage and inhibited by retinoblastoma protein RB1. Regulated by KAP1/TRIM28 which recruits HDAC1 to E2F1 resulting in deacetylation. Acetylated by P/CAF/KAT2B. Post-translationally, methylation at Lys-180 by SETD7 promotes E2F1 ubiquitin-dependent proteasomal degradation.

The protein localises to the nucleus. Its activity is regulated as follows. BIRC2/c-IAP1 stimulates its transcriptional activity. Transcription activator that binds DNA cooperatively with DP proteins through the E2 recognition site, 5'-TTTC[CG]CGC-3' found in the promoter region of a number of genes whose products are involved in cell cycle regulation or in DNA replication. The DRTF1/E2F complex functions in the control of cell-cycle progression from G1 to S phase. E2F1 binds preferentially RB1 in a cell-cycle dependent manner. It can mediate both cell proliferation and TP53/p53-dependent apoptosis. Blocks adipocyte differentiation by binding to specific promoters repressing CEBPA binding to its target gene promoters. Directly activates transcription of PEG10. Positively regulates transcription of RRP1B. The protein is Transcription factor E2F1 of Mus musculus (Mouse).